We begin with the raw amino-acid sequence, 502 residues long: Arabinose import ATP-binding protein AraG (502 aa).

ABC transporter domains are found at residues Leu5–Arg240 and Leu253–Lys496. Gly37–Ser44 is an ATP binding site.

This sequence belongs to the ABC transporter superfamily. Arabinose importer (TC 3.A.1.2.2) family. In terms of assembly, the complex is composed of two ATP-binding proteins (AraG), two transmembrane proteins (AraH) and a solute-binding protein (AraF).

It localises to the cell inner membrane. The enzyme catalyses L-arabinose(out) + ATP + H2O = L-arabinose(in) + ADP + phosphate + H(+). Functionally, part of the ABC transporter complex AraFGH involved in arabinose import. Responsible for energy coupling to the transport system. This is Arabinose import ATP-binding protein AraG from Rhizobium johnstonii (strain DSM 114642 / LMG 32736 / 3841) (Rhizobium leguminosarum bv. viciae).